The primary structure comprises 65 residues: Large ribosomal subunit protein uL29 (65 aa).

The protein belongs to the universal ribosomal protein uL29 family.

This Desulforapulum autotrophicum (strain ATCC 43914 / DSM 3382 / VKM B-1955 / HRM2) (Desulfobacterium autotrophicum) protein is Large ribosomal subunit protein uL29.